Reading from the N-terminus, the 448-residue chain is Exodeoxyribonuclease 7 large subunit (448 aa).

Belongs to the XseA family. As to quaternary structure, heterooligomer composed of large and small subunits.

The protein localises to the cytoplasm. It carries out the reaction Exonucleolytic cleavage in either 5'- to 3'- or 3'- to 5'-direction to yield nucleoside 5'-phosphates.. Functionally, bidirectionally degrades single-stranded DNA into large acid-insoluble oligonucleotides, which are then degraded further into small acid-soluble oligonucleotides. This Shewanella baltica (strain OS223) protein is Exodeoxyribonuclease 7 large subunit.